A 251-amino-acid polypeptide reads, in one-letter code: Triosephosphate isomerase (251 aa).

9–11 (NWK) contributes to the substrate binding site. H94 functions as the Electrophile in the catalytic mechanism. The active-site Proton acceptor is the E167. Substrate is bound by residues G173, S213, and 234 to 235 (GG).

The protein belongs to the triosephosphate isomerase family. In terms of assembly, homodimer.

The protein localises to the cytoplasm. The enzyme catalyses D-glyceraldehyde 3-phosphate = dihydroxyacetone phosphate. It participates in carbohydrate biosynthesis; gluconeogenesis. The protein operates within carbohydrate degradation; glycolysis; D-glyceraldehyde 3-phosphate from glycerone phosphate: step 1/1. Its function is as follows. Involved in the gluconeogenesis. Catalyzes stereospecifically the conversion of dihydroxyacetone phosphate (DHAP) to D-glyceraldehyde-3-phosphate (G3P). This is Triosephosphate isomerase from Finegoldia magna (strain ATCC 29328 / DSM 20472 / WAL 2508) (Peptostreptococcus magnus).